A 41-amino-acid polypeptide reads, in one-letter code: uncharacterized protein (41 aa).

A disordered region spans residues 1–41; sequence MGKKHRNRITGQKKNNHIPEKDIIAAEEAHGKEYSAAKRKP. The segment covering 17-41 has biased composition (basic and acidic residues); that stretch reads HIPEKDIIAAEEAHGKEYSAAKRKP.

This is an uncharacterized protein from Bacillus subtilis (strain 168).